Consider the following 507-residue polypeptide: Cytochrome P450 3A28 (507 aa).

Residue cysteine 442 coordinates heme.

Belongs to the cytochrome P450 family. Heme is required as a cofactor.

It localises to the endoplasmic reticulum membrane. Its subcellular location is the microsome membrane. The enzyme catalyses an organic molecule + reduced [NADPH--hemoprotein reductase] + O2 = an alcohol + oxidized [NADPH--hemoprotein reductase] + H2O + H(+). In terms of biological role, cytochromes P450 are a group of heme-thiolate monooxygenases. In liver microsomes, this enzyme is involved in an NADPH-dependent electron transport pathway. It oxidizes a variety of structurally unrelated compounds, including steroids, fatty acids, and xenobiotics. In Bos taurus (Bovine), this protein is Cytochrome P450 3A28 (CYP3A28).